The chain runs to 245 residues: 5-oxoprolinase subunit A (245 aa).

It belongs to the LamB/PxpA family. Forms a complex composed of PxpA, PxpB and PxpC.

The catalysed reaction is 5-oxo-L-proline + ATP + 2 H2O = L-glutamate + ADP + phosphate + H(+). Its function is as follows. Catalyzes the cleavage of 5-oxoproline to form L-glutamate coupled to the hydrolysis of ATP to ADP and inorganic phosphate. In Neisseria meningitidis serogroup A / serotype 4A (strain DSM 15465 / Z2491), this protein is 5-oxoprolinase subunit A.